The sequence spans 245 residues: MSAAVVTVRGLRRAFGAQQVLDALDLDIADGEFVAMLGLSGSGKSTLLRILAGLDHQADGSVVVPRSRAVVFQNPRLLPWRRALANVTFALADAGPDAPSRTARGRAALDEVGLADKADAWPLSLSGGEAQRVSLARALVREPDLLLLDEPFGALDALTRLKMYRLLHDLWARRHMAVLHVTHDVDEAILLADRVVVLSDGRVSLDRRVDLPFPRSRGDEGFDDLRRVLLAELGVREEVGHDRGR.

In terms of domain architecture, ABC transporter spans 6 to 225 (VTVRGLRRAF…SRGDEGFDDL (220 aa)). Residue 38 to 45 (GLSGSGKS) participates in ATP binding.

Belongs to the ABC transporter superfamily. Aliphatic sulfonates importer (TC 3.A.1.17.2) family. The complex is composed of two ATP-binding proteins (SsuB), two transmembrane proteins (SsuC) and a solute-binding protein (SsuA).

The protein localises to the cell membrane. It carries out the reaction ATP + H2O + aliphatic sulfonate-[sulfonate-binding protein]Side 1 = ADP + phosphate + aliphatic sulfonateSide 2 + [sulfonate-binding protein]Side 1.. In terms of biological role, part of the ABC transporter complex SsuABC involved in aliphatic sulfonates import. Responsible for energy coupling to the transport system. The protein is Aliphatic sulfonates import ATP-binding protein SsuB of Mycobacterium sp. (strain MCS).